The following is a 471-amino-acid chain: UDP-glycosyltransferase CGT (471 aa).

The active-site Proton acceptor is His-24. An an anthocyanidin-binding site is contributed by His-24. The Charge relay role is filled by Asp-120. Position 143 (Thr-143) interacts with UDP-alpha-D-glucose. The segment at 280 to 281 is UDP; that stretch reads SR. UDP-alpha-D-glucose-binding residues include Val-343, Gln-345, His-360, Trp-363, Asn-364, Ser-365, and Glu-368. Gly-383 contributes to the an anthocyanidin binding site. UDP-alpha-D-glucose is bound by residues Asp-384 and Gln-385.

Belongs to the UDP-glycosyltransferase family.

It carries out the reaction a 3'-hydro-2'-hydroxy-beta-oxodihydrochalcone + UDP-alpha-D-glucose = a 3'-(beta-D-glucopyranosyl)-2'-hydroxy-beta-oxodihydrochalcone + UDP + H(+). Its function is as follows. UDP-glucose-dependent glucosyltransferase catalyzing the c-glucosylation of 2-hydroxyflavanones. Acts preferentially on the dibenzoylmethane tautomers formed in equilibrium with 2-hydroxyflavanones. No activity with naringenin or naringenin chalcone. This Oryza sativa subsp. indica (Rice) protein is UDP-glycosyltransferase CGT.